The following is a 207-amino-acid chain: Pyridoxine/pyridoxamine 5'-phosphate oxidase (207 aa).

FMN-binding positions include 53–58 (RMVLLK), 68–69 (YT), K75, and Q97. K58 contacts substrate. 3 residues coordinate substrate: Y115, R119, and S123. FMN-binding positions include 132-133 (QS) and W177. 183–185 (RLH) lines the substrate pocket. R187 is an FMN binding site.

Belongs to the pyridoxamine 5'-phosphate oxidase family. In terms of assembly, homodimer. FMN serves as cofactor.

The catalysed reaction is pyridoxamine 5'-phosphate + O2 + H2O = pyridoxal 5'-phosphate + H2O2 + NH4(+). It catalyses the reaction pyridoxine 5'-phosphate + O2 = pyridoxal 5'-phosphate + H2O2. Its pathway is cofactor metabolism; pyridoxal 5'-phosphate salvage; pyridoxal 5'-phosphate from pyridoxamine 5'-phosphate: step 1/1. It functions in the pathway cofactor metabolism; pyridoxal 5'-phosphate salvage; pyridoxal 5'-phosphate from pyridoxine 5'-phosphate: step 1/1. Catalyzes the oxidation of either pyridoxine 5'-phosphate (PNP) or pyridoxamine 5'-phosphate (PMP) into pyridoxal 5'-phosphate (PLP). The sequence is that of Pyridoxine/pyridoxamine 5'-phosphate oxidase from Bartonella quintana (strain Toulouse) (Rochalimaea quintana).